Reading from the N-terminus, the 178-residue chain is NADH-quinone oxidoreductase subunit I 2 (178 aa).

2 4Fe-4S ferredoxin-type domains span residues 46-78 and 88-117; these read IVLT…MQAA and AWFR…LTPF. The [4Fe-4S] cluster site is built by Cys-58, Cys-61, Cys-64, Cys-68, Cys-97, Cys-100, Cys-103, and Cys-107.

The protein belongs to the complex I 23 kDa subunit family. NDH-1 is composed of 14 different subunits. Subunits NuoA, H, J, K, L, M, N constitute the membrane sector of the complex. Requires [4Fe-4S] cluster as cofactor.

It is found in the cell inner membrane. It catalyses the reaction a quinone + NADH + 5 H(+)(in) = a quinol + NAD(+) + 4 H(+)(out). Its function is as follows. NDH-1 shuttles electrons from NADH, via FMN and iron-sulfur (Fe-S) centers, to quinones in the respiratory chain. The immediate electron acceptor for the enzyme in this species is believed to be ubiquinone. Couples the redox reaction to proton translocation (for every two electrons transferred, four hydrogen ions are translocated across the cytoplasmic membrane), and thus conserves the redox energy in a proton gradient. The polypeptide is NADH-quinone oxidoreductase subunit I 2 (Syntrophobacter fumaroxidans (strain DSM 10017 / MPOB)).